Reading from the N-terminus, the 312-residue chain is D-alanine--D-alanine ligase (312 aa).

Positions 108–308 constitute an ATP-grasp domain; sequence KLVWQQTGIP…YSELVVKVLS (201 aa). 138 to 193 contacts ATP; sequence VAKLGVPLFVKPASEGSSVAVEKVKSADALPAALEEAAKHDKIVIVEKSIEGGGEY. Residues Asp-262, Glu-275, and Asn-277 each coordinate Mg(2+).

Belongs to the D-alanine--D-alanine ligase family. Mg(2+) is required as a cofactor. Mn(2+) serves as cofactor.

It localises to the cytoplasm. It catalyses the reaction 2 D-alanine + ATP = D-alanyl-D-alanine + ADP + phosphate + H(+). The protein operates within cell wall biogenesis; peptidoglycan biosynthesis. Cell wall formation. The sequence is that of D-alanine--D-alanine ligase from Burkholderia mallei (strain NCTC 10247).